The following is a 423-amino-acid chain: Inactive autotransporter heptosyltransferase BimC (423 aa).

Positions 1–10 are enriched in polar residues; it reads MPKVTFSGSA. Positions 1 to 49 are disordered; sequence MPKVTFSGSAPTLGVHAPPALDPRQPASPPPAASNGTHARGFSPPADMP. Fe(3+)-binding residues include cysteine 371, cysteine 374, cysteine 390, and cysteine 402.

The protein belongs to the glycosyltransferase 9 family. Homotrimer or homotetramer. Fe(3+) is required as a cofactor.

The protein localises to the cell inner membrane. The protein resides in the cytoplasm. Iron-binding protein which is required for the asymmetric polar distribution of the autotransporter BimA on the bacterial surface prior to its translocation into bacterial periplasm. Lacks heptosyltransferase activity. In Burkholderia thailandensis (strain ATCC 700388 / DSM 13276 / CCUG 48851 / CIP 106301 / E264), this protein is Inactive autotransporter heptosyltransferase BimC.